The following is a 291-amino-acid chain: G1/S-specific cyclin-D2 (291 aa).

The interval 264 to 291 is disordered; it reads QQQQSNPSKTIEELDQASTPTDVRDINL. At Thr-282 the chain carries Phosphothreonine.

This sequence belongs to the cyclin family. Cyclin D subfamily. In terms of assembly, interacts with the CDK4 and CDK6 protein kinases to form a serine/threonine kinase holoenzyme complex. The cyclin subunit imparts substrate specificity to the complex. Post-translationally, phosphorylation at Thr-282 by MAP kinases is required for ubiquitination and degradation by the DCX(AMBRA1) complex. Ubiquitinated by the DCX(AMBRA1) complex during the transition from G1 to S cell phase, leading to its degradation: ubiquitination is dependent on Thr-282 phosphorylation. The DCX(AMBRA1) complex represents the major regulator of CCND2 stability during the G1/S transition.

It localises to the nucleus. The protein resides in the cytoplasm. The protein localises to the nucleus membrane. Functionally, regulatory component of the cyclin D2-CDK4 (DC) complex that phosphorylates and inhibits members of the retinoblastoma (RB) protein family including RB1 and regulates the cell-cycle during G(1)/S transition. Phosphorylation of RB1 allows dissociation of the transcription factor E2F from the RB/E2F complex and the subsequent transcription of E2F target genes which are responsible for the progression through the G(1) phase. Hypophosphorylates RB1 in early G(1) phase. Cyclin D-CDK4 complexes are major integrators of various mitogenenic and antimitogenic signals. The chain is G1/S-specific cyclin-D2 (CCND2) from Gallus gallus (Chicken).